Here is a 146-residue protein sequence, read N- to C-terminus: Catabolic 3-dehydroquinase (146 aa).

Y24 functions as the Proton acceptor in the catalytic mechanism. Positions 78, 84, and 91 each coordinate substrate. H104 (proton donor) is an active-site residue. Substrate is bound by residues 105 to 106 (IT) and R115.

Belongs to the type-II 3-dehydroquinase family. As to quaternary structure, homododecamer. Adopts a ring-like structure, composed of an arrangement of two hexameric rings stacked on top of one another.

The catalysed reaction is 3-dehydroquinate = 3-dehydroshikimate + H2O. It participates in aromatic compound metabolism; 3,4-dihydroxybenzoate biosynthesis; 3,4-dihydroxybenzoate from 3-dehydroquinate: step 1/2. Is involved in the catabolism of quinate. Allows the utilization of quinate as carbon source via the beta-ketoadipate pathway. This Candida tropicalis (strain ATCC MYA-3404 / T1) (Yeast) protein is Catabolic 3-dehydroquinase.